Consider the following 657-residue polypeptide: Katanin p80 WD40 repeat-containing subunit B1 (657 aa).

6 WD repeats span residues 18–58 (AHSS…CVMS), 61–100 (GHTT…ILRT), 103–142 (GHKA…CIFK), 145–184 (SHTQ…VMFE), 187–226 (GHSG…VVSC), and 229–269 (EEAT…DVVV). Disordered stretches follow at residues 318 to 410 (NNEL…EDEP) and 423 to 454 (VEVQ…RAEP). A compositionally biased stretch (polar residues) spans 325 to 345 (PTPTGSSLRRSYDRPSTSCSK). Residues 351–385 (HSSESERRSPSSEEDRDEKESKAEIQNPEDYKEIF) show a composition bias toward basic and acidic residues.

This sequence belongs to the WD repeat KATNB1 family. As to quaternary structure, interacts with KATNA1. This interaction enhances the microtubule binding and severing activity of KATNA1 and also targets this activity to the centrosome.

Its subcellular location is the cytoplasm. The protein localises to the cytoskeleton. It is found in the microtubule organizing center. The protein resides in the centrosome. It localises to the spindle pole. Its subcellular location is the spindle. In terms of biological role, participates in a complex which severs microtubules in an ATP-dependent manner. May act to target the enzymatic subunit of this complex to sites of action such as the centrosome. Microtubule severing may promote rapid reorganization of cellular microtubule arrays and the release of microtubules from the centrosome following nucleation. The sequence is that of Katanin p80 WD40 repeat-containing subunit B1 from Gallus gallus (Chicken).